We begin with the raw amino-acid sequence, 125 residues long: Small ribosomal subunit protein uS12c (125 aa).

It belongs to the universal ribosomal protein uS12 family. As to quaternary structure, part of the 30S ribosomal subunit.

The protein resides in the plastid. Its subcellular location is the chloroplast. In terms of biological role, with S4 and S5 plays an important role in translational accuracy. Located at the interface of the 30S and 50S subunits. The polypeptide is Small ribosomal subunit protein uS12c (rps12) (Tupiella akineta (Green alga)).